The following is a 512-amino-acid chain: ATP synthase subunit alpha (512 aa).

ATP is bound at residue 169–176 (GDRQTGKT).

This sequence belongs to the ATPase alpha/beta chains family. F-type ATPases have 2 components, CF(1) - the catalytic core - and CF(0) - the membrane proton channel. CF(1) has five subunits: alpha(3), beta(3), gamma(1), delta(1), epsilon(1). CF(0) has three main subunits: a(1), b(2) and c(9-12). The alpha and beta chains form an alternating ring which encloses part of the gamma chain. CF(1) is attached to CF(0) by a central stalk formed by the gamma and epsilon chains, while a peripheral stalk is formed by the delta and b chains.

The protein resides in the cell membrane. It catalyses the reaction ATP + H2O + 4 H(+)(in) = ADP + phosphate + 5 H(+)(out). In terms of biological role, produces ATP from ADP in the presence of a proton gradient across the membrane. The alpha chain is a regulatory subunit. The polypeptide is ATP synthase subunit alpha (Buchnera aphidicola subsp. Acyrthosiphon pisum (strain 5A)).